The sequence spans 341 residues: Anthranilate phosphoribosyltransferase (341 aa).

Residues Gly-80, 83–84 (GD), Thr-88, 90–93 (NIST), 108–116 (KHGNRAVSS), and Ser-120 each bind 5-phospho-alpha-D-ribose 1-diphosphate. Gly-80 lines the anthranilate pocket. Ser-92 is a Mg(2+) binding site. Asn-111 is a binding site for anthranilate. Position 166 (Arg-166) interacts with anthranilate. Residues Asp-225 and Glu-226 each coordinate Mg(2+).

It belongs to the anthranilate phosphoribosyltransferase family. As to quaternary structure, homodimer. Mg(2+) is required as a cofactor.

It catalyses the reaction N-(5-phospho-beta-D-ribosyl)anthranilate + diphosphate = 5-phospho-alpha-D-ribose 1-diphosphate + anthranilate. It functions in the pathway amino-acid biosynthesis; L-tryptophan biosynthesis; L-tryptophan from chorismate: step 2/5. Catalyzes the transfer of the phosphoribosyl group of 5-phosphorylribose-1-pyrophosphate (PRPP) to anthranilate to yield N-(5'-phosphoribosyl)-anthranilate (PRA). This chain is Anthranilate phosphoribosyltransferase, found in Priestia megaterium (strain ATCC 12872 / QMB1551) (Bacillus megaterium).